Reading from the N-terminus, the 128-residue chain is Small ribosomal subunit protein uS11 (128 aa).

This sequence belongs to the universal ribosomal protein uS11 family. Part of the 30S ribosomal subunit. Interacts with proteins S7 and S18. Binds to IF-3.

Located on the platform of the 30S subunit, it bridges several disparate RNA helices of the 16S rRNA. Forms part of the Shine-Dalgarno cleft in the 70S ribosome. The chain is Small ribosomal subunit protein uS11 from Wolbachia pipientis wMel.